Here is a 161-residue protein sequence, read N- to C-terminus: Immunity protein YezG (161 aa).

Monomer. Interacts with the C-terminus of cognate toxin YeeF, probably with 2:2 stoichiometry. The second YezG molecules binds with lower affinity.

Its subcellular location is the cytoplasm. In terms of biological role, immunity component of an LXG toxin-immunity module. These modules promote kin selection, mediate competition in biofilms, and drive spatial segregation of different strains, indicating that LXG toxins may help avoid warfare between strains in biofilms. Neutralizes the toxic abilities of cognate toxin YeeF upon expression in E.coli and in vitro. This is Immunity protein YezG from Bacillus spizizenii (strain ATCC 23059 / NRRL B-14472 / W23) (Bacillus subtilis subsp. spizizenii).